Consider the following 125-residue polypeptide: Small ribosomal subunit protein uS12 (125 aa).

The residue at position 89 (D89) is a 3-methylthioaspartic acid.

Belongs to the universal ribosomal protein uS12 family. In terms of assembly, part of the 30S ribosomal subunit. Contacts proteins S8 and S17. May interact with IF1 in the 30S initiation complex.

In terms of biological role, with S4 and S5 plays an important role in translational accuracy. Its function is as follows. Interacts with and stabilizes bases of the 16S rRNA that are involved in tRNA selection in the A site and with the mRNA backbone. Located at the interface of the 30S and 50S subunits, it traverses the body of the 30S subunit contacting proteins on the other side and probably holding the rRNA structure together. The combined cluster of proteins S8, S12 and S17 appears to hold together the shoulder and platform of the 30S subunit. The sequence is that of Small ribosomal subunit protein uS12 from Clostridium kluyveri (strain ATCC 8527 / DSM 555 / NBRC 12016 / NCIMB 10680 / K1).